Consider the following 175-residue polypeptide: Protein-export protein SecB (175 aa).

It belongs to the SecB family. Homotetramer, a dimer of dimers. One homotetramer interacts with 1 SecA dimer.

It localises to the cytoplasm. In terms of biological role, one of the proteins required for the normal export of preproteins out of the cell cytoplasm. It is a molecular chaperone that binds to a subset of precursor proteins, maintaining them in a translocation-competent state. It also specifically binds to its receptor SecA. This is Protein-export protein SecB from Ehrlichia chaffeensis (strain ATCC CRL-10679 / Arkansas).